The following is a 585-amino-acid chain: Formate--tetrahydrofolate ligase (585 aa).

Residue 65 to 72 coordinates ATP; that stretch reads TPHGEGKT.

It belongs to the formate--tetrahydrofolate ligase family.

The enzyme catalyses (6S)-5,6,7,8-tetrahydrofolate + formate + ATP = (6R)-10-formyltetrahydrofolate + ADP + phosphate. It participates in one-carbon metabolism; tetrahydrofolate interconversion. This is Formate--tetrahydrofolate ligase from Shewanella baltica (strain OS195).